We begin with the raw amino-acid sequence, 279 residues long: Pleckstrin homology domain-containing family F member 1 (279 aa).

Residues 35–131 (VLLGEGVLTK…WISHIEECVR (97 aa)) enclose the PH domain. Residues 152 to 212 (DKATDICMRC…VCSLCYRELA (61 aa)) form an FYVE-type zinc finger. Cys-158, Cys-161, Cys-175, Cys-178, Cys-183, Cys-186, Cys-204, and Cys-207 together coordinate Zn(2+). A disordered region spans residues 218–264 (EEAEEQGAGSPGQPAHLARPICGASSGDDDDSDEDKEGSRDGDWPSS). The span at 244 to 253 (GDDDDSDEDK) shows a compositional bias: acidic residues.

In terms of tissue distribution, highly expressed in heart and skeletal muscle. Weakly expressed in brain, thymus, spleen, kidney, liver, small intestine, placenta and lung.

It is found in the nucleus. Its subcellular location is the cytoplasm. It localises to the perinuclear region. The protein resides in the lysosome. In terms of biological role, may induce apoptosis through the lysosomal-mitochondrial pathway. Translocates to the lysosome initiating the permeabilization of lysosomal membrane (LMP) and resulting in the release of CTSD and CTSL to the cytoplasm. Triggers the caspase-independent apoptosis by altering mitochondrial membrane permeabilization (MMP) resulting in the release of PDCD8. This Homo sapiens (Human) protein is Pleckstrin homology domain-containing family F member 1 (PLEKHF1).